The sequence spans 240 residues: Transcription factor bHLH47 (240 aa).

A compositionally biased stretch (polar residues) spans Met-1 to Ala-13. Positions Met-1–Val-26 are disordered. Residues Pro-27–Val-77 form the bHLH domain. A coiled-coil region spans residues Val-98–Lys-131. Positions Asn-128–Pro-138 are enriched in polar residues. Positions Asn-128–Glu-153 are disordered.

In terms of assembly, homodimer. Forms heterodimer with PYEL proteins bHLH115, bHLH104 and ILR3. As to expression, expressed constitutively in roots, leaves, stems, and flowers.

Its subcellular location is the nucleus. This is Transcription factor bHLH47 (BHLH47) from Arabidopsis thaliana (Mouse-ear cress).